The primary structure comprises 248 residues: Methionine aminopeptidase (248 aa).

Residue H77 coordinates substrate. Positions 94, 105, and 169 each coordinate a divalent metal cation. Position 176 (H176) interacts with substrate. A divalent metal cation is bound by residues E202 and E233.

Belongs to the peptidase M24A family. Methionine aminopeptidase type 1 subfamily. In terms of assembly, monomer. Requires Co(2+) as cofactor. The cofactor is Zn(2+). Mn(2+) serves as cofactor. It depends on Fe(2+) as a cofactor.

It carries out the reaction Release of N-terminal amino acids, preferentially methionine, from peptides and arylamides.. Removes the N-terminal methionine from nascent proteins. The N-terminal methionine is often cleaved when the second residue in the primary sequence is small and uncharged (Met-Ala-, Cys, Gly, Pro, Ser, Thr, or Val). Requires deformylation of the N(alpha)-formylated initiator methionine before it can be hydrolyzed. The chain is Methionine aminopeptidase from Mycoplasma genitalium (strain ATCC 33530 / DSM 19775 / NCTC 10195 / G37) (Mycoplasmoides genitalium).